A 473-amino-acid polypeptide reads, in one-letter code: Nitrogenase vanadium-iron protein alpha chain (473 aa).

Residues cysteine 49, cysteine 74, and cysteine 137 each coordinate [8Fe-7S] cluster. Positions 256 and 422 each coordinate [7Fe-V-9S-C-homocitryl] cluster.

It belongs to the NifD/NifK/NifE/NifN family. Hexamer of two alpha, two beta, and two delta chains. [8Fe-7S] cluster is required as a cofactor. Requires [7Fe-V-9S-C-homocitryl] cluster as cofactor.

The catalysed reaction is N2 + 8 reduced [2Fe-2S]-[ferredoxin] + 16 ATP + 16 H2O = H2 + 8 oxidized [2Fe-2S]-[ferredoxin] + 2 NH4(+) + 16 ADP + 16 phosphate + 6 H(+). In terms of biological role, this vanadium-iron protein is part of the nitrogenase complex that catalyzes the key enzymatic reactions in nitrogen fixation. This chain is Nitrogenase vanadium-iron protein alpha chain (vnfD), found in Azotobacter chroococcum mcd 1.